The primary structure comprises 187 residues: Avirulence protein ATR39-2 (187 aa).

Positions M1–A20 are cleaved as a signal peptide. Positions R49–R66 match the RxLR-dEER motif.

It belongs to the RxLR effector family.

The protein resides in the secreted. It is found in the host cell. Functionally, secreted effector that acts as an elicitor of hypersensitive response (HR) specifically on plants carrying defense protein RPP39. The allele ATR39-1 is recognized by RPP39, whereas the ATR39-2 allele is nor recognized. This chain is Avirulence protein ATR39-2, found in Hyaloperonospora arabidopsidis (strain Emoy2) (Downy mildew agent).